Consider the following 117-residue polypeptide: UPF0295 protein Bsph_0336 (117 aa).

Transmembrane regions (helical) follow at residues 13-33 (SFALALIFIGFIVMYGGIFFK) and 37-57 (ILVLIFMTLGVLCIIGSTVVY).

It belongs to the UPF0295 family.

It is found in the cell membrane. The chain is UPF0295 protein Bsph_0336 from Lysinibacillus sphaericus (strain C3-41).